Reading from the N-terminus, the 308-residue chain is GDP-L-colitose synthase (308 aa).

Residues 7-13 and 101-104 each bind NADP(+); these read GAGGMVG and LGSS. Tyr-132 functions as the Proton donor/acceptor in the catalytic mechanism. NADP(+)-binding positions include Lys-136, 160–163, and His-176; that span reads PCNL. Substrate contacts are provided by Lys-184, Trp-199, and Arg-206.

The protein belongs to the NAD(P)-dependent epimerase/dehydratase family. Fucose synthase subfamily. In terms of assembly, homodimer.

The catalysed reaction is GDP-beta-L-colitose + NAD(+) = GDP-4-dehydro-3,6-dideoxy-alpha-D-mannose + NADH + H(+). The enzyme catalyses GDP-beta-L-colitose + NADP(+) = GDP-4-dehydro-3,6-dideoxy-alpha-D-mannose + NADPH + H(+). Its pathway is nucleotide-sugar metabolism; GDP-L-colitose biosynthesis. In terms of biological role, involved in the biosynthesis of the L-colitose (3,6-dideoxyl-L-xylo-hexose) present in the O-antigen region of lipopolysaccharides (LPS) where it serves as antigenic determinant and are vital for bacterial defense and survival. Catalyzes the two-step NADP-dependent conversion of GDP-4-keto-3,6-dideoxy-D-mannose to GDP-L-colitose. ColC is a bifunctional enzyme catalyzing the C-5 epimerization of GDP-4-keto-3,6-dideoxy-D-mannose and the subsequent C-4 keto reduction of the resulting L-epimer to give GDP-L-colitose. It can use both NADP(+) and NAD(+) as electron acceptor, with a slight preference for NADP(+). The chain is GDP-L-colitose synthase from Yersinia pseudotuberculosis.